The primary structure comprises 128 residues: Large-conductance mechanosensitive channel (128 aa).

Residues 1–16 are Cytoplasmic-facing; that stretch reads MNFIKEFREFAMRGNV. Residues 17 to 45 traverse the membrane as a helical segment; it reads VDMAVGVIIGSAFGKIVSSLVSDIFTPVL. The Periplasmic portion of the chain corresponds to 46–74; that stretch reads GILTGGIDFKDMKFVLAQAQGDVPAVTLN. Residues 75-94 traverse the membrane as a helical segment; that stretch reads YGLFIQNVIDFIIIAFAIFM. The Cytoplasmic portion of the chain corresponds to 95–128; that stretch reads MIKVINKVRKPEEKKTAPKAETLLTEIRDLLKNK.

Belongs to the MscL family. Homopentamer.

It localises to the cell inner membrane. In terms of biological role, channel that opens in response to stretch forces in the membrane lipid bilayer. Forms a nonselective ion channel with a conductance of about 4 nanosiemens. May participate in the regulation of osmotic pressure changes within the cell. The sequence is that of Large-conductance mechanosensitive channel from Haemophilus influenzae (strain ATCC 51907 / DSM 11121 / KW20 / Rd).